The sequence spans 178 residues: Ribosome maturation factor RimM (178 aa).

The 79-residue stretch at A100–F178 folds into the PRC barrel domain.

This sequence belongs to the RimM family. As to quaternary structure, binds ribosomal protein uS19.

The protein resides in the cytoplasm. Functionally, an accessory protein needed during the final step in the assembly of 30S ribosomal subunit, possibly for assembly of the head region. Essential for efficient processing of 16S rRNA. May be needed both before and after RbfA during the maturation of 16S rRNA. It has affinity for free ribosomal 30S subunits but not for 70S ribosomes. This Pseudomonas putida (strain W619) protein is Ribosome maturation factor RimM.